The primary structure comprises 329 residues: Protein SPATA31F3 (329 aa).

The helical transmembrane segment at 11–31 (VGYSVYTYGSIFIIALIIWQV) threads the bilayer. Positions 58 to 85 (SDRATRAKRTSKEEAEKLQKLLDTMKSQ) form a coiled coil. Disordered regions lie at residues 149 to 184 (ADRS…RSAT), 201 to 250 (QQLD…AAPT), and 288 to 329 (KPMT…KRNI). Ser-152 and Ser-153 each carry phosphoserine. 2 stretches are compositionally biased toward polar residues: residues 154–184 (ELTY…RSAT) and 201–223 (QQLD…SSTD). Positions 232 to 242 (QKKRKKTKKLA) are enriched in basic residues. Over residues 293-320 (EPEKTHSPVRDQAEGAEKKKKPECDLKA) the composition is skewed to basic and acidic residues.

Belongs to the SPATA31 family.

It localises to the membrane. The chain is Protein SPATA31F3 from Rattus norvegicus (Rat).